The primary structure comprises 432 residues: Chorismate synthase aro-2 (432 aa).

Residues histidine 17, histidine 106, and aspartate 367 contribute to the active site. Residues 406 to 432 (LKQTINSGKDTVGNGVSENVQESDLAQ) form a disordered region. Positions 408–432 (QTINSGKDTVGNGVSENVQESDLAQ) are enriched in polar residues.

The protein belongs to the chorismate synthase family. In terms of assembly, homotetramer.

It carries out the reaction 5-O-(1-carboxyvinyl)-3-phosphoshikimate = chorismate + phosphate. It catalyses the reaction FMNH2 + NADP(+) = FMN + NADPH + 2 H(+). Its pathway is metabolic intermediate biosynthesis; chorismate biosynthesis; chorismate from D-erythrose 4-phosphate and phosphoenolpyruvate: step 7/7. Functionally, bifunctional chorismate synthase and flavin reductase that catalyzes the conversion of 5-enolpyruvylshikimate 3-phosphate (EPSP) to form chorismate, which is the last common intermediate in the synthesis of the three aromatic amino acids phenylalanine, tyrosine and tryptophan. Acts also as a flavin reductase (FR) able to generate reduced flavin mononucleotide in the presence of NADPH. This is Chorismate synthase aro-2 from Neurospora crassa (strain ATCC 24698 / 74-OR23-1A / CBS 708.71 / DSM 1257 / FGSC 987).